The sequence spans 664 residues: Serine/threonine-protein kinase PknD (664 aa).

The Cytoplasmic segment spans residues 1–381; that stretch reads MSDAVPQVGS…PAGNKRKVWA (381 aa). The Protein kinase domain maps to 15-276; the sequence is YQLLRLLGRG…DLAIAAHDAL (262 aa). ATP-binding positions include 21-29 and Lys44; that span reads LGRGGMGEV. Thr135 carries the post-translational modification Phosphothreonine; by autocatalysis. Asp138 serves as the catalytic Proton acceptor. Phosphothreonine; by autocatalysis occurs at positions 169, 171, 173, and 209. The segment at 303–333 is disordered; that stretch reads TGLSQSESGIAGAGTGPPTPGAARWSPGDSA. The helical transmembrane segment at 382–402 threads the bilayer; sequence VVGAAAIVLVAIVAAAGYLVL. At 403–664 the chain is on the extracellular side; the sequence is RPSWSPTQAS…GNDRVVKLTS (262 aa). NHL repeat units follow at residues 414–456, 457–497, 498–539, 540–581, 582–623, and 624–664; these read QTVL…LATG, STGT…LAAG, SNNQ…LAAG, SKTQ…LEAE, SNNQ…LLAG, and STTS…KLTS.

This sequence belongs to the protein kinase superfamily. Ser/Thr protein kinase family. In terms of assembly, homodimer. The extracellular domain interacts with host laminin. In terms of processing, autophosphorylated. Dephosphorylated by PstP.

Its subcellular location is the cell membrane. It carries out the reaction L-seryl-[protein] + ATP = O-phospho-L-seryl-[protein] + ADP + H(+). It catalyses the reaction L-threonyl-[protein] + ATP = O-phospho-L-threonyl-[protein] + ADP + H(+). Its activity is regulated as follows. Dimerization activates the kinase domain of unphosphorylated PknD via an allosteric mechanism, triggering autophosphorylation and phosphorylation of target proteins. Phosphorylated PknD is fully active even in the absence of dimerization. Functionally, part of a signaling pathway that enables adaptation to osmotic stress through cell wall remodeling and virulence factor production. Key microbial factor required for central nervous system tuberculosis. Required for invasion of host brain endothelia, but not macrophages, lung epithelia or other endothelia. This Mycobacterium tuberculosis (strain CDC 1551 / Oshkosh) protein is Serine/threonine-protein kinase PknD (pknD).